Reading from the N-terminus, the 367-residue chain is Cystinosin (367 aa).

The first 22 residues, 1–22, serve as a signal peptide directing secretion; the sequence is MIRRWLVIFILFPLQLIEKCES. At 23–125 the chain is on the lumenal side; it reads TVDFSVPPIV…LVIHSNIVSI (103 aa). Asparagine 51, asparagine 66, asparagine 84, asparagine 104, and asparagine 107 each carry an N-linked (GlcNAc...) asparagine glycan. A PQ-loop 1 domain is found at 123–189; sequence VSIINQVIGW…LFWVPSIKEQ (67 aa). Residues 126-150 traverse the membrane as a helical segment; sequence INQVIGWIYFVAWSVSFYPQVITNW. Residues 151 to 159 are Cytoplasmic-facing; the sequence is RRKSVVGLS. Residues 160 to 179 traverse the membrane as a helical segment; it reads FDFVVLNLMGFVAYSVFNIG. Asparagine 166 lines the L-cystine pocket. The Lumenal portion of the chain corresponds to 180 to 202; that stretch reads LFWVPSIKEQFLLKYPNGVNPVD. The chain crosses the membrane as a helical span at residues 203-225; sequence SNDVFFSLHAVALTLVVIVQCLL. A H(+)-binding site is contributed by aspartate 205. Residues 226–234 are Cytoplasmic-facing; sequence YERGSQRVS. Residues 235–257 form a helical membrane-spanning segment; the sequence is WLAISFLVLSWLFTLIALIMAAV. Topologically, residues 258 to 263 are lumenal; the sequence is GATTWL. A PQ-loop 2 domain is found at 263–328; the sequence is LQFLFCFSYI…QSYNNDQWTL (66 aa). A helical transmembrane segment spans residues 264 to 289; the sequence is QFLFCFSYIKLAVTLVKYFPQAYMNF. L-cystine is bound by residues lysine 273, lysine 280, and tyrosine 281. The Cytoplasmic portion of the chain corresponds to 290 to 298; sequence HYKSTEGWS. The chain crosses the membrane as a helical span at residues 299-308; it reads IGNVLLDFTG. Residues asparagine 301 and aspartate 305 each contribute to the L-cystine site. H(+) is bound at residue aspartate 305. Residues 309–331 lie on the Lumenal side of the membrane; it reads GSFSLLQMFLQSYNNDQWTLIFG. The chain crosses the membrane as a helical span at residues 332 to 354; sequence DPTKFGLGIFSIIFDVVFFIQHF. Aspartate 346 provides a ligand contact to H(+). Over 355-367 the chain is Cytoplasmic; that stretch reads CLYRKKPGYDQLN. A Lysosomal targeting motif motif is present at residues 362–366; the sequence is GYDQL.

It belongs to the cystinosin family. Interacts with components of the V-ATPase complex. Interacts with components of the Ragulator complex. Interacts with RRAGA/RagA and RRAGC/RagC. Interacts with AP-3 complex subunit mu (AP3M1 or AP3M2).

Its subcellular location is the lysosome membrane. It localises to the melanosome membrane. The enzyme catalyses L-cystine(out) + H(+)(out) = L-cystine(in) + H(+)(in). With respect to regulation, switches between a lumen- and a cytosol-open conformation: pH induces conformational changes and shifts the equilibrium to facilitate the transition between the lumen- and cytosol-open conformation, thereby promoting cystine transport. Protonation of specific aspartate residues (Asp-205, Asp-305 and Asp-346) favors the cytosol-open conformation. Functionally, cystine/H(+) symporter that mediates export of cystine, the oxidized dimer of cysteine, from lysosomes. Plays an important role in melanin synthesis by catalyzing cystine export from melanosomes, possibly by inhibiting pheomelanin synthesis. In addition to cystine export, also acts as a positive regulator of mTORC1 signaling in kidney proximal tubular cells, via interactions with components of the v-ATPase and Ragulator complexes. Also involved in small GTPase-regulated vesicle trafficking and lysosomal localization of LAMP2A, independently of cystine transporter activity. The protein is Cystinosin of Bos taurus (Bovine).